Reading from the N-terminus, the 806-residue chain is MSVVSNHHSNGNGNSTVYDTNGNDEIKKEVKDEPMASDSEVPFGELMKRDKKEKKQKKRKAESGSDEDDYKPEKRKSSAKNGKKKDVGSDSEDDYKPEKKKSKKNNKKKAQESSEDDDEESEGDVSEEDVKPQIHSDDELEEEDEAPTTDDEEEQKRKEKERRKKEKREKKERKEKKRLEKENRKIKEEDDEDSDDEDDEKAKKKKRKSKGAEKSKPSTSKKDAGGKKEPPKKKVKKEEDIEDIWEWWKEEKKPAGVKWNSLQHCGPLFAPPYIPLPSHVHFKYGGEKMKLTLETEEIAQFYAGVLDHEYSTKEAFNKNFMKDWRKVMTVEERERIHDLKKCDFRAIDAYQKEQREIRKAMTKEEKLKIKEEKEAEVKIYGIAIIDGHRQKVANFRIEPPGVFRGRGGHPKMGLIKKRIMPEDVIINCGKDTEIPKPPPGHKWKEVRHDNTVTWLCSWTESVLGQNKYIMLNPSSKIKGEKDFEKYETARRLKKKIGGIRERYTDDFKSKEMRVRQRATALYFIDKLALRAGNEKDVDEAADTVGCCSLRVEHIKLFDSAKLNEDDKKEKEFVVEFDFLGKDSIRYFNRVSVEKRVYKNLKIFMEGKAPSDDLFDRLDTATLNDHLRSLMDGLTVKVFRTYNASITLQEQLIKLTNPKDNVAAKILSYNRANRQVAILCNHQRAVSKGFDESMQKLEQKIKDKKKEVKEAEAALKSARGAEKEKAQKKYDRLKEQLKKLKISRTDKDENKQIALGTSKLNYIDPRITVAWCKKFEVPLEKVFTKTHREKFRWAIDMTNSSDEEYVF.

Residues 1-15 (MSVVSNHHSNGNGNS) show a composition bias toward low complexity. Positions 1-236 (MSVVSNHHSN…KKEPPKKKVK (236 aa)) are disordered. Residues 24–34 (DEIKKEVKDEP) show a composition bias toward basic and acidic residues. Composition is skewed to basic residues over residues 49-60 (RDKKEKKQKKRK) and 98-108 (EKKKSKKNNKK). A compositionally biased stretch (acidic residues) spans 113 to 127 (SSEDDDEESEGDVSE). Residues 128–137 (EDVKPQIHSD) show a composition bias toward basic and acidic residues. Residues 138 to 153 (DELEEEDEAPTTDDEE) show a composition bias toward acidic residues. Residues 159–176 (EKERRKKEKREKKERKEK) show a composition bias toward basic residues. The segment covering 177 to 188 (KRLEKENRKIKE) has biased composition (basic and acidic residues). A compositionally biased stretch (acidic residues) spans 189–199 (EDDEDSDDEDD). A compositionally biased stretch (basic and acidic residues) spans 210–229 (KGAEKSKPSTSKKDAGGKKE). Interaction with DNA regions lie at residues 467-468 (KY), 530-535 (RAGNEK), and 634-636 (TVK). Positions 474–803 (SSKIKGEKDF…IDMTNSSDEE (330 aa)) constitute a Topo IB-type catalytic domain. Tyr-761 functions as the O-(3'-phospho-DNA)-tyrosine intermediate in the catalytic mechanism.

The protein belongs to the type IB topoisomerase family. Expressed in male germ cells and in mature sperm.

It is found in the nucleus. The protein localises to the nucleolus. It localises to the chromosome. It carries out the reaction ATP-independent breakage of single-stranded DNA, followed by passage and rejoining.. Functionally, releases the supercoiling and torsional tension of DNA introduced during the DNA replication and transcription by transiently cleaving and rejoining one strand of the DNA duplex. Introduces a single-strand break via transesterification at a target site in duplex DNA. The scissile phosphodiester is attacked by the catalytic tyrosine of the enzyme, resulting in the formation of a DNA-(3'-phosphotyrosyl)-enzyme intermediate and the expulsion of a 5'-OH DNA strand. The free DNA strand then rotates around the intact phosphodiester bond on the opposing strand, thus removing DNA supercoils. Finally, in the religation step, the DNA 5'-OH attacks the covalent intermediate to expel the active-site tyrosine and restore the DNA phosphodiester backbone. Required for normal spermatogenesis and oogenesis. This is DNA topoisomerase 1 (top-1) from Caenorhabditis elegans.